We begin with the raw amino-acid sequence, 193 residues long: Homeobox protein HD-12 (193 aa).

Positions 123–185 (SVIRRINFPK…NARRRILPFM (63 aa)) form a DNA-binding region, homeobox; TALE-type.

This sequence belongs to the TALE/KNOX homeobox family.

The protein resides in the nucleus. The chain is Homeobox protein HD-12 (HD-12) from Encephalitozoon cuniculi (strain GB-M1) (Microsporidian parasite).